The primary structure comprises 344 residues: Protein RecA (344 aa).

65-72 (GPESSGKT) is a binding site for ATP. Residues 323–337 (ELREKFQPAEAPREA) are compositionally biased toward basic and acidic residues. Positions 323 to 344 (ELREKFQPAEAPREAGDDEDKE) are disordered.

This sequence belongs to the RecA family.

It localises to the cytoplasm. In terms of biological role, can catalyze the hydrolysis of ATP in the presence of single-stranded DNA, the ATP-dependent uptake of single-stranded DNA by duplex DNA, and the ATP-dependent hybridization of homologous single-stranded DNAs. It interacts with LexA causing its activation and leading to its autocatalytic cleavage. The chain is Protein RecA from Xanthomonas axonopodis pv. citri (strain 306).